The following is a 277-amino-acid chain: F420-dependent methylenetetrahydromethanopterin dehydrogenase (277 aa).

A disordered region spans residues 252–277; that stretch reads MDAVSRKPHHPEGKRLSKKALMEKPE.

This sequence belongs to the MTD family.

It catalyses the reaction 5,10-methylenetetrahydromethanopterin + oxidized coenzyme F420-(gamma-L-Glu)(n) + 2 H(+) = 5,10-methenyl-5,6,7,8-tetrahydromethanopterin + reduced coenzyme F420-(gamma-L-Glu)(n). The protein operates within one-carbon metabolism; methanogenesis from CO(2); 5,10-methylene-5,6,7,8-tetrahydromethanopterin from 5,10-methenyl-5,6,7,8-tetrahydromethanopterin (coenzyme F420 route): step 1/1. Functionally, catalyzes the reversible reduction of methenyl-H(4)MPT(+) to methylene-H(4)MPT. In Methanocaldococcus jannaschii (strain ATCC 43067 / DSM 2661 / JAL-1 / JCM 10045 / NBRC 100440) (Methanococcus jannaschii), this protein is F420-dependent methylenetetrahydromethanopterin dehydrogenase (mtd).